A 445-amino-acid polypeptide reads, in one-letter code: Trigger factor (445 aa).

One can recognise a PPIase FKBP-type domain in the interval 171–256 (NDIVIIDFKG…VHVVNEVETP (86 aa)).

This sequence belongs to the FKBP-type PPIase family. Tig subfamily.

Its subcellular location is the cytoplasm. It carries out the reaction [protein]-peptidylproline (omega=180) = [protein]-peptidylproline (omega=0). Functionally, involved in protein export. Acts as a chaperone by maintaining the newly synthesized protein in an open conformation. Functions as a peptidyl-prolyl cis-trans isomerase. This Malacoplasma penetrans (strain HF-2) (Mycoplasma penetrans) protein is Trigger factor.